A 441-amino-acid polypeptide reads, in one-letter code: Transducin-like enhancer protein 7 (441 aa).

Disordered stretches follow at residues 1 to 77 (MSGE…QWHL) and 91 to 119 (PDAQ…SSSS). The segment covering 27–49 (ESSGVSSQPEPQVQQQLGSLLGV) has biased composition (low complexity). Residues 62–76 (PADQETSTVTQQQWH) are compositionally biased toward polar residues. The segment covering 108–119 (GSEVGQPYSSSS) has biased composition (low complexity). WD repeat units follow at residues 156-194 (FHGK…AGEK), 204-243 (HPQD…QVRA), 247-285 (STGP…LIRK), 286-325 (HEVP…RLHQ), and 409-441 (EESS…QLLY).

This sequence belongs to the WD repeat Groucho/TLE family.

This Homo sapiens (Human) protein is Transducin-like enhancer protein 7.